Reading from the N-terminus, the 243-residue chain is Ribonuclease HII (243 aa).

The RNase H type-2 domain occupies 23–217 (SVIVGVDEVG…LSSECEGAPP (195 aa)). Positions 29, 30, and 122 each coordinate a divalent metal cation. The interval 223–243 (LSSTGIKTPVDGRGDAVATRD) is disordered. The segment covering 232-243 (VDGRGDAVATRD) has biased composition (basic and acidic residues).

Belongs to the RNase HII family. The cofactor is Mn(2+). Mg(2+) is required as a cofactor.

It is found in the cytoplasm. It carries out the reaction Endonucleolytic cleavage to 5'-phosphomonoester.. Its function is as follows. Endonuclease that specifically degrades the RNA of RNA-DNA hybrids. This Anaplasma marginale (strain St. Maries) protein is Ribonuclease HII.